A 340-amino-acid polypeptide reads, in one-letter code: Fructose-bisphosphate aldolase (340 aa).

D-glyceraldehyde 3-phosphate is bound at residue Ser53. Asp95 serves as the catalytic Proton donor. His96, Asp131, Glu161, and His212 together coordinate Zn(2+). Gly213 is a binding site for dihydroxyacetone phosphate. His249 serves as a coordination point for Zn(2+). Residues 250-252 (GGS) and 271-274 (NLDT) each bind dihydroxyacetone phosphate.

This sequence belongs to the class II fructose-bisphosphate aldolase family. Requires Zn(2+) as cofactor.

The enzyme catalyses beta-D-fructose 1,6-bisphosphate = D-glyceraldehyde 3-phosphate + dihydroxyacetone phosphate. The protein operates within carbohydrate degradation; glycolysis; D-glyceraldehyde 3-phosphate and glycerone phosphate from D-glucose: step 4/4. Functionally, catalyzes the aldol condensation of dihydroxyacetone phosphate (DHAP or glycerone-phosphate) with glyceraldehyde 3-phosphate (G3P) to form fructose 1,6-bisphosphate (FBP) in gluconeogenesis and the reverse reaction in glycolysis. The polypeptide is Fructose-bisphosphate aldolase (fba) (Streptomyces galbus).